The primary structure comprises 207 residues: Reticulon-1-A (207 aa).

Residues 21 to 207 (AIDLLYWRDI…AKIPGTKQKE (187 aa)) enclose the Reticulon domain. 2 consecutive transmembrane segments (helical) span residues 35 to 55 (IVFG…VVSV) and 139 to 159 (VLMW…LLIM).

Expressed in the animal hemisphere (presumptive neural ectoderm) of blastula and gastrula stage embryos, and along the anterior neural border, in the panplacodal primordium, and in the dorsolateral side of archenteron roof of late neurula embryos. At the tailbud stage, expression localizes to the central nervous system, including the spinal cord, prosencephalon, mesencephalon and rhombencephalon, as well as the lateral line placode, otic vesicle and pronephros.

It is found in the endoplasmic reticulum membrane. The protein localises to the nucleus. Functionally, inhibits amyloid precursor protein processing, probably by blocking BACE1 activity. The protein is Reticulon-1-A (rtn1-a) of Xenopus laevis (African clawed frog).